Consider the following 163-residue polypeptide: COP9 signalosome complex subunit 9 (163 aa).

One can recognise a PCI domain in the interval 5 to 120; that stretch reads EVLHAVLDPK…SVGRRIKVLR (116 aa).

Component of a COP9 signalosome-like (CSN) complex.

The protein localises to the cytoplasm. Its subcellular location is the nucleus. In terms of biological role, component of the COP9 signalosome (CSN) complex that acts as a regulator of the ubiquitin (Ubl) conjugation pathway by mediating the deneddylation of the cullin subunit of SCF-type E3 ubiquitin-protein ligase complexes. The complex is involved in the regulation of the mating pheromone response. The sequence is that of COP9 signalosome complex subunit 9 (CSN9) from Eremothecium gossypii (strain ATCC 10895 / CBS 109.51 / FGSC 9923 / NRRL Y-1056) (Yeast).